The sequence spans 116 residues: Protein Rev (116 aa).

The residue at position 5 (serine 5) is a Phosphoserine; by host CK2. The tract at residues 18–26 (IIRLLYQSN) is homomultimerization. A disordered region spans residues 27–49 (PYPEPAGTRQAQRNRRRRWRARQ). The Nuclear localization signal and RNA-binding (RRE) signature appears at 34 to 50 (TRQAQRNRRRRWRARQR). Residues 38–49 (QRNRRRRWRARQ) show a composition bias toward basic residues. Positions 73-84 (LQLPPLERLTLD) match the Nuclear export signal and binding to XPO1 motif. Residues 86–116 (SEDCGTSGEKGVGSPQTSGESPAVLGTGAKE) form a disordered region. A phosphoserine; by host mark is found at serine 92 and serine 99.

Belongs to the HIV-1 REV protein family. In terms of assembly, homomultimer; when bound to the RRE. Multimeric assembly is essential for activity and may involve XPO1. Binds to human KPNB1, XPO1, TNPO1, RANBP5 and IPO7. Interacts with the viral Integrase. Interacts with human KHDRBS1. Interacts with human NAP1; this interaction decreases Rev multimerization and stimulates its activity. Interacts with human DEAD-box helicases DDX3 and DDX24; these interactions may serve for viral RNA export to the cytoplasm and packaging, respectively. Interacts with human PSIP1; this interaction may inhibit HIV-1 DNA integration by promoting dissociation of the Integrase-LEDGF/p75 complex. Asymmetrically arginine dimethylated at one site by host PRMT6. Methylation impairs the RNA-binding activity and export of viral RNA from the nucleus to the cytoplasm. In terms of processing, phosphorylated by protein kinase CK2. Presence of, and maybe binding to the N-terminus of the regulatory beta subunit of CK2 is necessary for CK2-mediated Rev's phosphorylation.

The protein resides in the host nucleus. The protein localises to the host nucleolus. It is found in the host cytoplasm. In terms of biological role, escorts unspliced or incompletely spliced viral pre-mRNAs (late transcripts) out of the nucleus of infected cells. These pre-mRNAs carry a recognition sequence called Rev responsive element (RRE) located in the env gene, that is not present in fully spliced viral mRNAs (early transcripts). This function is essential since most viral proteins are translated from unspliced or partially spliced pre-mRNAs which cannot exit the nucleus by the pathway used by fully processed cellular mRNAs. Rev itself is translated from a fully spliced mRNA that readily exits the nucleus. Rev's nuclear localization signal (NLS) binds directly to KPNB1/Importin beta-1 without previous binding to KPNA1/Importin alpha-1. KPNB1 binds to the GDP bound form of RAN (Ran-GDP) and targets Rev to the nucleus. In the nucleus, the conversion from Ran-GDP to Ran-GTP dissociates Rev from KPNB1 and allows Rev's binding to the RRE in viral pre-mRNAs. Rev multimerization on the RRE via cooperative assembly exposes its nuclear export signal (NES) to the surface. Rev can then form a complex with XPO1/CRM1 and Ran-GTP, leading to nuclear export of the complex. Conversion from Ran-GTP to Ran-GDP mediates dissociation of the Rev/RRE/XPO1/RAN complex, so that Rev can return to the nucleus for a subsequent round of export. Beside KPNB1, also seems to interact with TNPO1/Transportin-1, RANBP5/IPO5 and IPO7/RANBP7 for nuclear import. The nucleoporin-like HRB/RIP is an essential cofactor that probably indirectly interacts with Rev to release HIV RNAs from the perinuclear region to the cytoplasm. This Human immunodeficiency virus type 1 group M subtype H (isolate VI991) (HIV-1) protein is Protein Rev.